Consider the following 559-residue polypeptide: Formate--tetrahydrofolate ligase (559 aa).

68–75 provides a ligand contact to ATP; that stretch reads TPAGEGKT.

It belongs to the formate--tetrahydrofolate ligase family.

The enzyme catalyses (6S)-5,6,7,8-tetrahydrofolate + formate + ATP = (6R)-10-formyltetrahydrofolate + ADP + phosphate. The protein operates within one-carbon metabolism; tetrahydrofolate interconversion. In Sinorhizobium fredii (strain NBRC 101917 / NGR234), this protein is Formate--tetrahydrofolate ligase.